The sequence spans 709 residues: Tyrosine-protein phosphatase cdc-14 (709 aa).

One can recognise a Tyrosine-protein phosphatase domain in the interval 196-354 (DFNWIIPGKI…QKFCWSLSQS (159 aa)). C295 (phosphocysteine intermediate) is an active-site residue. The Nuclear localization signal signature appears at 366–371 (KRNVRR). The Nuclear export signal signature appears at 372–381 (LVNQVDDINL). 3 disordered regions span residues 403 to 541 (VQVQ…LTRT), 573 to 594 (RYLS…GTSP), and 628 to 661 (ESKP…PYPS). The span at 404 to 413 (QVQNGRSTAP) shows a compositional bias: polar residues. Residues 463–479 (TTSPNSSSSRRFVKSST) are compositionally biased toward low complexity. Polar residues-rich tracts occupy residues 480–490 (PQMTVPSQAYL) and 501–521 (PSKN…TPNG). The segment covering 526-541 (RTRNSSGNTTSTLTRT) has biased composition (low complexity). A compositionally biased stretch (polar residues) spans 639–649 (PGTSKSTSSLK).

This sequence belongs to the protein-tyrosine phosphatase family. Non-receptor class CDC14 subfamily.

The protein localises to the cytoplasm. It is found in the cytoskeleton. Its subcellular location is the microtubule organizing center. It localises to the centrosome. The protein resides in the spindle. The protein localises to the midbody. It is found in the nucleus. It catalyses the reaction O-phospho-L-tyrosyl-[protein] + H2O = L-tyrosyl-[protein] + phosphate. Inhibited by sodium orthovanadate. Weakly inhibited by sodium fluoride and okadaic acid. Its function is as follows. Protein phosphatase that negatively regulates the G1-to-S phase transition to inhibit the cell cycle and establish quiescence in cells of multiple lineages including vulval, hypodermal and intestinal. Promotes nuclear accumulation and activity of the cyclin-dependent kinase inhibitor cki-1 which leads to inhibition of G1 progression during vulval tissue development. Has been shown to not be required for cytokinesis. However, in the embryo, in a contrasting study, has been shown to act as a regulator of central spindle formation and cytokinesis, and may be required for localization of the spindle component zen-4, and its interacting partner air-2 at the spindle during late cell divisions. Functionally, main regulator of cell cycle arrest in vulval precursor cells. The protein is Tyrosine-protein phosphatase cdc-14 of Caenorhabditis elegans.